Consider the following 80-residue polypeptide: Conotoxin Bu3 (80 aa).

Residues Met1–Ala22 form the signal peptide. The propeptide occupies Asp23–Arg51. Disulfide bonds link Cys53–Cys69, Cys60–Cys72, and Cys68–Cys79.

It belongs to the conotoxin O1 superfamily. Expressed by the venom duct.

It localises to the secreted. The sequence is that of Conotoxin Bu3 from Conus bullatus (Bubble cone).